Reading from the N-terminus, the 158-residue chain is 6,7-dimethyl-8-ribityllumazine synthase (158 aa).

Residues F24, 62-64, and 86-88 contribute to the 5-amino-6-(D-ribitylamino)uracil site; these read CFE and AVI. 91 to 92 is a binding site for (2S)-2-hydroxy-3-oxobutyl phosphate; it reads DT. The active-site Proton donor is the H94. Residue F119 participates in 5-amino-6-(D-ribitylamino)uracil binding. R133 contributes to the (2S)-2-hydroxy-3-oxobutyl phosphate binding site.

The protein belongs to the DMRL synthase family.

The catalysed reaction is (2S)-2-hydroxy-3-oxobutyl phosphate + 5-amino-6-(D-ribitylamino)uracil = 6,7-dimethyl-8-(1-D-ribityl)lumazine + phosphate + 2 H2O + H(+). The protein operates within cofactor biosynthesis; riboflavin biosynthesis; riboflavin from 2-hydroxy-3-oxobutyl phosphate and 5-amino-6-(D-ribitylamino)uracil: step 1/2. Functionally, catalyzes the formation of 6,7-dimethyl-8-ribityllumazine by condensation of 5-amino-6-(D-ribitylamino)uracil with 3,4-dihydroxy-2-butanone 4-phosphate. This is the penultimate step in the biosynthesis of riboflavin. This is 6,7-dimethyl-8-ribityllumazine synthase from Picosynechococcus sp. (strain ATCC 27264 / PCC 7002 / PR-6) (Agmenellum quadruplicatum).